Here is a 2842-residue protein sequence, read N- to C-terminus: MAAASYDQLLKQVEALKMENSNLRQELEDNSNHLTELETEASNMKEVLKQLQGSIEDETMTSGQIDLLERLKEFNLDSNFPGVKLRSKMSLRSYGSREGSVSSRSGECSPVPMGSFPRRAFVNGSRESTGYLEELEKERSLLLADLDKEEKEKDWYYAQLQNLTKRIDSLPLTENFSLQTDMTRRQLEYEARQIRAAMEEQLGTCQDMEKRAQRRIARIQQIEKDILRVRQLLQSQAAEAERSSQSKHETASHEAERQLEGQGVAESNLATSGSGQSSAARVDHETAGVLSSSGTHSAPRRLTSHLGTKVEMVYSLLSMLGTHDKDDMSRTLLAMSSSQDSCISMRQSGCLPLLIQLLHGNDKDSVLLGNSRGSKEARARASAALHNIIHSQPDDKRGRREIRVLHLLEQIRAYCETCWEWQEAHEQGMDQDKNPMPAPVEHQICPAVCVLMKLSFDEEHRHAMNELGGLQAIAELLQVDCEMHGLTDDHYSVTLRRYAGMALTNLTFGDVANKATLCSMKGCMRALVAQLKSESEDLQQVIASVLRNLSWRADVNSKKTLREVGSVKALMECALEVKKESTLKSVLSALWNLSAHCTENKADICAVDGALAFLVGTLTYRSQTNTLAIIESGGGILRNVSSLIATNEDHRQILRENNCLQTLLQHLKSHSLTIVSNACGTLWNLSARNPKDQEALWDMGAVSMLKNLIHSKHKMIAMGSAAALRNLMANRPAKYKDANIMSPGSSLPSLHVRKQKALEAELDAQHLSETFDNIDNLSPKASHRSKQRHKQNLYGDYVFDASRHDDNRSDNFNTGNMTVLSPYLNTTVLPSSSSSRGSLDSSRSEKDRSLERERGIGLSTYHSATENPGTSSKRGLQLSATAAQIAKVMEEVSALHTSQDDRSPASAAELHCVAEERTAARRSSASHTHPNTHNFAKSESSNRTCSMPYAKVEYKRSSNDSLNSVTSSDGYGKRGQMKPSVESYSEDDEGKFCSYGQYPADLAHKIHSANHMDDNGGELDTPINYSLKYSDEQLNSGRQSPSQNERWARPKHVIEDEIKQNEQRQSRSQNTNFPVYSENTDDKHLKFQQHFGQQECVSPYRSRGTNGSETNRMGSSHAVNQNVNQSLCQEDDYEDDKPTNYSERYSEEEQHEEEERPTNYSIKYNEEKHHVDQPIDYSLKYATDISSSQKPSFSFSKTPSVQGTKTEHNSPSSEAASAPSSNAKRQSQLHPSSAQRNGQTPKGTACKVPSINQETMQTYCVEDTPICFSRCSSLSSLSSAEDEIGCDQTTQEADSANTLQIAEIKENDVTRSAQDPASDVPAVSQSTRTKPSRLQASGLASESARHKAVEFSSGAKSPSKSGAQTPKSPPEHYVQETPLVFSRCTSVSSLDSFESRSIASSVQSEPCSGMVSGIVSPSDLPDSPGQTMPPSRSKTPPPPPPPQPVQTKREVPKTKVPAAEQREGGPKQTAVSAAVQRVQVLPDADTLLHFATESTPDGFSCSSSLSALSLDEPFIQKDVELRIMPPVQENDNGNETEPEQPEESNENQDKEVEKPDSEKDLLDDSDDDDIEILEECIISAMPTKSSRKAKKLAQTASKLPPPVARKPSQLPVYKLLPSQSRLQAQKHVSFTPGDDVPRVYCVEGTPINFSTATSLSDLTIESPPNELAAGDGVRASVQSGEFEKRDTIPTEGRSTDEAQRGKVSSIAIPDLDGSKAEEGDILAECINSALPKGRSHKPFRVKKIMDQVQQASMTSSGTNKNQIDTKKKKPTSPVKPMPQNTEYRTRVRKNTDSKVNVNTEETFSDNKDSKKQSLKNNPKDLNDKLPDNEDRVRGGFTFDSPHHYAPIEGTPYCFSRNDSLSSLDFDDDDVDLSREKAELRKGKESKDSEAKVTCHTEPSSSQQSARKAQASTKHPVNRGPSKPLLQEQPTFPQSSKDVPDRGAATDEKLQNFAIENTPVCFSRNSSLSSLSDVDQENNNNEETGPVRDAEPANAQGQPGKPQASGYAPKSFHVEDTPVCFSRNSSLSSLSIDSEDDLLRECISSAMPKKRRPSRLKGEGEWQSPRKVGSVLAEDLTLDLKDIQRPESEHGLSPDSENFDWKAIQEGANSIVSSLHQAAAAAACLSRQASSDSDSILSLKSGVSLGSPFHLTPDQEEKPFTSHKGPRILKPGEKSTLEAKKIESENKGIKGGKKVYKSLITGKIRSNSEISSQMKQPLQTNMPSISRGRTMIHIPGVRNSSSSTSPVSKKGPPLKTPASKSPSEGPVATTSPRGTKPAVKSELSPITRQTSHISGSNKGPSRSGSRDSTPSRPTQQPLSRPMQSPGRNSISPGRNGISTPNKLSQLPRTSSPSTASTKSSGSGKMSYTSPGRQLSQQNLSKQTGLSKNASSIPRSESASKGLNQMNNSNGSNKKVELSRMSSTKSSGSESDRSERPALVRQSTFIKEAPSPTLRRKLEESASFESLSPSSRPDSPTRSQAQTPVLSPSLPDMSLSTHPSVQAGGWRKLPPNLSPTIEYSDGRPSKRHDIARSHSESPSRLPVNRAGTWKREHSKHSSSLPRVSTWRRTGSSSSILSASSESSEKAKSEDEKHVNSVPGPRQMKENQVPTKGTWRKIKESEISPTNTVSQTTSSGAASGAESKTLIYQMAPAVSRTEDVWVRIEDCPINNPRSGRSPTGNTPPVIDSISEKGNPSIKDSKDTQGKQSVGSGSPVQTVGLENRLNSFIQVEAPEQKGTETKAGQGSPAPVAETGETCMAERTPFSSSSSSKHSSPSGTVAARVTPFNYNPSPRKSSADSTSARPSQIPTPVGSSTKKRDSKTDSTESSGAQSPKRHSGSYLVTSV.

Residue Ala2 is modified to N-acetylalanine. Positions 2–62 (AAASYDQLLK…GSIEDETMTS (61 aa)) form a coiled coil. Residues Ser105 and Ser109 each carry the phosphoserine modification. A coiled-coil region spans residues 125–260 (SRESTGYLEE…ASHEAERQLE (136 aa)). Residues 238–304 (AEAERSSQSK…THSAPRRLTS (67 aa)) are disordered. Basic and acidic residues predominate over residues 239-259 (EAERSSQSKHETASHEAERQL). Over residues 268–279 (NLATSGSGQSSA) the composition is skewed to polar residues. ARM repeat units lie at residues 451-493 (LMKL…HYSV), 503-545 (LTNL…IASV), 546-589 (LRNL…VLSA), 590-636 (LWNL…GGGI), 637-681 (LRNV…ACGT), 682-723 (LWNL…SAAA), and 724-765 (LRNL…LDAQ). Phosphoserine occurs at positions 742, 746, and 778. A disordered region spans residues 828 to 877 (VLPSSSSSRGSLDSSRSEKDRSLERERGIGLSTYHSATENPGTSSKRGLQ). Residues 831 to 841 (SSSSSRGSLDS) show a composition bias toward low complexity. Over residues 842 to 855 (SRSEKDRSLERERG) the composition is skewed to basic and acidic residues. Residues 860–877 (TYHSATENPGTSSKRGLQ) show a composition bias toward polar residues. Position 906 is a phosphoserine (Ser906). Disordered regions lie at residues 921-942 (RRSS…ESSN) and 956-988 (RSSN…SEDD). Residues 931-942 (NTHNFAKSESSN) show a composition bias toward polar residues. Over residues 959 to 969 (NDSLNSVTSSD) the composition is skewed to low complexity. Phosphoserine is present on residues Ser985, Ser1036, and Ser1040. The interval 1018–1167 (ELDTPINYSL…TNYSIKYNEE (150 aa)) is interaction with catenins. Disordered regions lie at residues 1058-1078 (IKQN…VYSE), 1092-1166 (GQQE…KYNE), 1188-1249 (SQKP…CKVP), and 1306-1373 (ENDV…PEHY). Composition is skewed to polar residues over residues 1066-1078 (SRSQ…VYSE) and 1103-1128 (RGTN…QSLC). Positions 1144-1157 (RYSEEEQHEEEERP) are enriched in basic and acidic residues. 2 stretches are compositionally biased toward low complexity: residues 1188–1200 (SQKP…KTPS) and 1209–1223 (NSPS…SSNA). Composition is skewed to polar residues over residues 1224-1242 (KRQS…QTPK) and 1323-1340 (VSQS…SGLA). The span at 1352–1363 (SSGAKSPSKSGA) shows a compositional bias: low complexity. Residues Ser1357, Ser1368, Ser1382, Ser1389, and Ser1392 each carry the phosphoserine modification. Disordered stretches follow at residues 1398 to 1474 (IASS…VSAA), 1525 to 1568 (PPVQ…SDDD), 1584 to 1609 (KSSR…KPSQ), and 1661 to 1711 (ESPP…IPDL). Position 1435 is a phosphothreonine (Thr1435). Positions 1435–1444 (TPPPPPPPQP) are enriched in pro residues. The span at 1532 to 1546 (NGNETEPEQPEESNE) shows a compositional bias: acidic residues. The span at 1547-1562 (NQDKEVEKPDSEKDLL) shows a compositional bias: basic and acidic residues. Position 1565 is a phosphoserine (Ser1565). A compositionally biased stretch (basic and acidic residues) spans 1681–1700 (EFEKRDTIPTEGRSTDEAQR). Ser1714 is modified (phosphoserine). A compositionally biased stretch (polar residues) spans 1748 to 1762 (VQQASMTSSGTNKNQ). 3 disordered regions span residues 1748 to 1950 (VQQA…EKLQ), 1963 to 2010 (RNSS…APKS), and 2043 to 2067 (SSAM…PRKV). A Phosphoserine modification is found at Ser1772. Basic and acidic residues-rich tracts occupy residues 1783 to 1792 (YRTRVRKNTD) and 1804 to 1833 (SDNK…DRVR). A phosphoserine mark is found at Ser1859, Ser1861, and Ser1862. Positions 1864–1891 (DFDDDDVDLSREKAELRKGKESKDSEAK) are highly charged. The segment covering 1871-1894 (DLSREKAELRKGKESKDSEAKVTC) has biased composition (basic and acidic residues). Over residues 1899-1911 (SSSQQSARKAQAS) the composition is skewed to low complexity. A compositionally biased stretch (polar residues) spans 1927-1936 (EQPTFPQSSK). Residues 1937–1949 (DVPDRGAATDEKL) are compositionally biased toward basic and acidic residues. Phosphoserine is present on residues Ser1969 and Ser1971. The interaction with AXIN1 stretch occupies residues 2034 to 2058 (EDDLLRECISSAMPKKRRPSRLKGE). Phosphoserine occurs at positions 2087, 2092, 2125, 2129, 2130, and 2132. 3 disordered regions span residues 2148 to 2173 (FHLT…PGEK), 2234 to 2641 (PGVR…AESK), and 2664 to 2842 (CPIN…VTSV). The residue at position 2151 (Thr2151) is a Phosphothreonine. The tract at residues 2167–2674 (ILKPGEKSTL…PINNPRSGRS (508 aa)) is basic region. Polar residues-rich tracts occupy residues 2257 to 2272 (ASKS…TSPR) and 2283 to 2347 (SPIT…QLPR). Phosphoserine occurs at positions 2260, 2270, and 2283. The span at 2348–2369 (TSSPSTASTKSSGSGKMSYTSP) shows a compositional bias: low complexity. Polar residues-rich tracts occupy residues 2370–2411 (GRQL…NGSN) and 2418–2427 (RMSSTKSSGS). The segment covering 2459-2477 (SASFESLSPSSRPDSPTRS) has biased composition (low complexity). 2 positions are modified to phosphoserine: Ser2473 and Ser2535. An interaction with DLG1 region spans residues 2475–2842 (TRSQAQTPVL…HSGSYLVTSV (368 aa)). Residues 2518–2535 (SDGRPSKRHDIARSHSES) show a composition bias toward basic and acidic residues. Polar residues predominate over residues 2555 to 2568 (SSSLPRVSTWRRTG). Ser2569 is subject to Phosphoserine. Low complexity predominate over residues 2569–2579 (SSSSILSASSE). Residues 2580 to 2592 (SSEKAKSEDEKHV) are compositionally biased toward basic and acidic residues. Over residues 2629–2638 (TTSSGAASGA) the composition is skewed to low complexity. 2 stretches are compositionally biased toward polar residues: residues 2668-2679 (NPRSGRSPTGNT) and 2702-2713 (GKQSVGSGSPVQ). Residues Ser2671 and Ser2674 each carry the phosphoserine modification. Residues 2674–2842 (SPTGNTPPVI…HSGSYLVTSV (169 aa)) are interaction with MAPRE1. A Phosphothreonine modification is found at Thr2679. A phosphoserine mark is found at Ser2710 and Ser2723. Low complexity predominate over residues 2762–2773 (SSSSSSKHSSPS). The span at 2783–2809 (FNYNPSPRKSSADSTSARPSQIPTPVG) shows a compositional bias: polar residues. At Ser2788 the chain carries Phosphoserine. Positions 2802–2805 (SQIP) match the Microtubule tip localization signal motif. A PDZ-binding motif is present at residues 2840–2842 (TSV).

The protein belongs to the adenomatous polyposis coli (APC) family. Forms homooligomers. Found in a complex consisting of ARHGEF4, APC and CTNNB1. Found in a complex composed of MACF1, APC, AXIN1, CTNNB1 and GSK3B. The complex composed, at least, of APC, CTNNB1 and GSK3B interacts with JPT1; the interaction requires the inactive form of GSK3B (phosphorylated at 'Ser-9'). Interacts with APC2. Interacts with DLG1 (via PDZ domains) and DLG3 (via PDZ domains). Interacts with alpha- and beta-catenins. Interacts with AXIN1 (via RGS domain). Interacts with ARHGEF4 (via N-terminus). Interacts (via C-terminal residues 2674-2843) with MAPRE1 (via C-terminal residues 206-211); the interaction inhibits association with and bundling of F-actin. Interacts with MAPRE2 and MAPRE3 (via C-terminus). Interacts with DIAPH1; DIAPH1 acts as a scaffold protein for MAPRE1 and APC to stabilize microtubules and promote cell migration. Interacts with DIAPH2. Interacts with SCRIB; may mediate APC targeting to adherens junctions of epithelial cells. Interacts with SPATA13 (via N-terminus and SH3 domain). Interacts with ASAP1 (via SH3 domain). Interacts (at the cell membrane) with AMER1 and AMER2 (via ARM repeats). Interacts with KHDRBS1. Interacts with actin; binds both to F-actin and actin filament bundles. Post-translationally, phosphorylated; phosphorylation enhances the F-actin bundling activity. Phosphorylated by GSK3B. Ubiquitinated, leading to its degradation by the proteasome. Ubiquitination is facilitated by Axin. Deubiquitinated by ZRANB1/TRABID.

The protein resides in the cell junction. Its subcellular location is the adherens junction. It localises to the cytoplasm. It is found in the cytoskeleton. The protein localises to the cell projection. The protein resides in the lamellipodium. Its subcellular location is the ruffle membrane. It localises to the cell membrane. In terms of biological role, tumor suppressor. Promotes rapid degradation of CTNNB1 and participates in Wnt signaling as a negative regulator. APC activity is correlated with its phosphorylation state. Activates the GEF activity of SPATA13 and ARHGEF4. Plays a role in hepatocyte growth factor (HGF)-induced cell migration. Required for MMP9 up-regulation via the JNK signaling pathway in colorectal tumor cells. Associates with both microtubules and actin filaments, components of the cytoskeleton. Plays a role in mediating the organization of F-actin into ordered bundles. Functions downstream of Rho GTPases and DIAPH1 to selectively stabilize microtubules. Acts as a mediator of ERBB2-dependent stabilization of microtubules at the cell cortex. It is required for the localization of MACF1 to the cell membrane and this localization of MACF1 is critical for its function in microtubule stabilization. This Rattus norvegicus (Rat) protein is Adenomatous polyposis coli protein (Apc).